The sequence spans 201 residues: Glycerol-3-phosphate acyltransferase (201 aa).

5 consecutive transmembrane segments (helical) span residues 10–30 (MLIGALIFGYVLGSIPFGLIL), 60–80 (LAAATLILDALKGTAAALIAA), 86–106 (AAIAAGFGAFIGHLFPVWIGF), 116–136 (LGVLIGLAWAGALVFAAAWIV), and 166–186 (ALAALFAIMTVIVFIKHRANI).

This sequence belongs to the PlsY family. In terms of assembly, probably interacts with PlsX.

It is found in the cell inner membrane. It carries out the reaction an acyl phosphate + sn-glycerol 3-phosphate = a 1-acyl-sn-glycero-3-phosphate + phosphate. The protein operates within lipid metabolism; phospholipid metabolism. Functionally, catalyzes the transfer of an acyl group from acyl-phosphate (acyl-PO(4)) to glycerol-3-phosphate (G3P) to form lysophosphatidic acid (LPA). This enzyme utilizes acyl-phosphate as fatty acyl donor, but not acyl-CoA or acyl-ACP. The sequence is that of Glycerol-3-phosphate acyltransferase from Brucella canis (strain ATCC 23365 / NCTC 10854 / RM-666).